Consider the following 279-residue polypeptide: Vitamin B12-binding protein (279 aa).

An N-terminal signal peptide occupies residues 1–20 (MTFRFLCWLTGLLLCTAAYA). The Fe/B12 periplasmic-binding domain maps to 24–276 (RVISLAPHAT…QLAELKLAPS (253 aa)). A disulfide bridge links C189 with C265.

The protein belongs to the BtuF family. In terms of assembly, the complex is composed of two ATP-binding proteins (BtuD), two transmembrane proteins (BtuC) and a solute-binding protein (BtuF).

It localises to the periplasm. Its function is as follows. Part of the ABC transporter complex BtuCDF involved in vitamin B12 import. Binds vitamin B12 and delivers it to the periplasmic surface of BtuC. This chain is Vitamin B12-binding protein, found in Pectobacterium atrosepticum (strain SCRI 1043 / ATCC BAA-672) (Erwinia carotovora subsp. atroseptica).